Consider the following 204-residue polypeptide: Holliday junction branch migration complex subunit RuvA (204 aa).

A domain I region spans residues 1–64 (MIGRLRGILL…EDAQLLYGFN (64 aa)). The tract at residues 65–143 (TVKERALFRE…GWGAGDLFTP (79 aa)) is domain II. Residues 144-155 (FTDAAPTDSAAA) are flexible linker. A domain III region spans residues 156-204 (SSNSAEEEAVSALLALGYKPTQASKVVSQIAKPDMSSEQLIREALKSMV).

The protein belongs to the RuvA family. Homotetramer. Forms an RuvA(8)-RuvB(12)-Holliday junction (HJ) complex. HJ DNA is sandwiched between 2 RuvA tetramers; dsDNA enters through RuvA and exits via RuvB. An RuvB hexamer assembles on each DNA strand where it exits the tetramer. Each RuvB hexamer is contacted by two RuvA subunits (via domain III) on 2 adjacent RuvB subunits; this complex drives branch migration. In the full resolvosome a probable DNA-RuvA(4)-RuvB(12)-RuvC(2) complex forms which resolves the HJ.

It localises to the cytoplasm. In terms of biological role, the RuvA-RuvB-RuvC complex processes Holliday junction (HJ) DNA during genetic recombination and DNA repair, while the RuvA-RuvB complex plays an important role in the rescue of blocked DNA replication forks via replication fork reversal (RFR). RuvA specifically binds to HJ cruciform DNA, conferring on it an open structure. The RuvB hexamer acts as an ATP-dependent pump, pulling dsDNA into and through the RuvAB complex. HJ branch migration allows RuvC to scan DNA until it finds its consensus sequence, where it cleaves and resolves the cruciform DNA. This Vibrio parahaemolyticus serotype O3:K6 (strain RIMD 2210633) protein is Holliday junction branch migration complex subunit RuvA.